Consider the following 520-residue polypeptide: GMP synthase [glutamine-hydrolyzing] (520 aa).

A Glutamine amidotransferase type-1 domain is found at 3 to 200 (AIAIIDFGSQ…FLDIANCKRD (198 aa)). Cys84 (nucleophile) is an active-site residue. Residues His175 and Glu177 contribute to the active site. The GMPS ATP-PPase domain occupies 201-386 (WTMKSIIEKQ…IGLSNEIIFQ (186 aa)). 228–234 (SGGVDSS) contributes to the ATP binding site.

Homodimer.

The catalysed reaction is XMP + L-glutamine + ATP + H2O = GMP + L-glutamate + AMP + diphosphate + 2 H(+). It functions in the pathway purine metabolism; GMP biosynthesis; GMP from XMP (L-Gln route): step 1/1. Catalyzes the synthesis of GMP from XMP. The polypeptide is GMP synthase [glutamine-hydrolyzing] (Wolbachia sp. subsp. Brugia malayi (strain TRS)).